Reading from the N-terminus, the 451-residue chain is MNTNKILETIKMIEEEKLDIRTITMGISLLDCIDPDGEKARIKIYDKITKSAEHLVEVGRQIESEFGIPIVNKRVSVTPISIIAGATNEESYVKFAQTLDKAADTLGIDFLGGFSALVQKGCTKGDKILINSIPEALAITQKVCASVNVGCTKSGINMNAVRDMGEIIKKTAELTKDKKGFGCAKLVVFANAVEDNPFMAGAFHGVGEAEKIINVGVSGPGVVKRALEKVRGQSFDVVAETIKKTAFKVTRMGELVANEASRRLGVPFGIVDLSLAPTPAVGDSVAEILEEIGLETVGTHGTIAALAMLNDAVKKGGVMACSHVGGLSGAFIPVSEDAGMIEAVIKGSLNLEKLEGMTCVCSVGLDMIAIPGNTPASTISAMIADEAAIGVINNKTTAVRIIPAPGCSVGDMVEFGGLLGRAPVMKVNENSSELFAQRGGRIPAPIHSFKN.

It belongs to the UPF0210 family. As to quaternary structure, homodimer.

The polypeptide is UPF0210 protein CLL_A1718 (Clostridium botulinum (strain Eklund 17B / Type B)).